The chain runs to 256 residues: Geranylgeranylglyceryl phosphate synthase (256 aa).

Positions 28 and 53 each coordinate Mg(2+). Residues 172–178, 203–204, and 225–226 contribute to the sn-glycerol 1-phosphate site; these read YLEAGSG, GG, and GT.

This sequence belongs to the GGGP/HepGP synthase family. Group II subfamily. Mg(2+) serves as cofactor.

The protein localises to the cytoplasm. The catalysed reaction is sn-glycerol 1-phosphate + (2E,6E,10E)-geranylgeranyl diphosphate = sn-3-O-(geranylgeranyl)glycerol 1-phosphate + diphosphate. It participates in membrane lipid metabolism; glycerophospholipid metabolism. Functionally, prenyltransferase that catalyzes the transfer of the geranylgeranyl moiety of geranylgeranyl diphosphate (GGPP) to the C3 hydroxyl of sn-glycerol-1-phosphate (G1P). This reaction is the first ether-bond-formation step in the biosynthesis of archaeal membrane lipids. In Methanococcus maripaludis (strain C5 / ATCC BAA-1333), this protein is Geranylgeranylglyceryl phosphate synthase.